A 105-amino-acid polypeptide reads, in one-letter code: Large ribosomal subunit protein eL36 (105 aa).

It belongs to the eukaryotic ribosomal protein eL36 family. Component of the large ribosomal subunit.

It is found in the cytoplasm. The protein localises to the cytosol. Functionally, component of the large ribosomal subunit. The ribosome is a large ribonucleoprotein complex responsible for the synthesis of proteins in the cell. The sequence is that of Large ribosomal subunit protein eL36 (RPL36) from Gallus gallus (Chicken).